We begin with the raw amino-acid sequence, 132 residues long: Amicyanin (132 aa).

A signal peptide spans 1 to 26 (MISAKTLRPAIAAIALFAIGATGAWA). Gln27 carries the pyrrolidone carboxylic acid modification. A Plastocyanin-like domain is found at 27–132 (QDKITVTSEK…PFMRGKVIVE (106 aa)). Residues His80, Cys119, His122, and Met125 each contribute to the Cu cation site.

Cu cation serves as cofactor.

The protein localises to the periplasm. It functions in the pathway one-carbon metabolism; methylamine degradation. Functionally, primary acceptor of electrons from methylamine dehydrogenase. Passes those electrons on either a soluble cytochrome c or to pseudoazurin. This Paracoccus versutus (Thiobacillus versutus) protein is Amicyanin (mauC).